The primary structure comprises 1293 residues: Phosphoribosylformylglycinamidine synthase (1293 aa).

ATP contacts are provided by residues 305–316 (GAATGSGGEIRD) and Ala-676. The tract at residues 305–327 (GAATGSGGEIRDEGATGRGSKPK) is disordered. The Mg(2+) site is built by Asp-677, Glu-716, Asn-720, and Asp-884. Position 886 (Ser-886) interacts with ATP. In terms of domain architecture, Glutamine amidotransferase type-1 spans 1040-1293 (MAILREQGVN…MFRNARVNLG (254 aa)). Catalysis depends on Cys-1133, which acts as the Nucleophile. Residues His-1258 and Glu-1260 contribute to the active site.

It in the N-terminal section; belongs to the FGAMS family. In terms of assembly, monomer.

The protein localises to the cytoplasm. It carries out the reaction N(2)-formyl-N(1)-(5-phospho-beta-D-ribosyl)glycinamide + L-glutamine + ATP + H2O = 2-formamido-N(1)-(5-O-phospho-beta-D-ribosyl)acetamidine + L-glutamate + ADP + phosphate + H(+). The protein operates within purine metabolism; IMP biosynthesis via de novo pathway; 5-amino-1-(5-phospho-D-ribosyl)imidazole from N(2)-formyl-N(1)-(5-phospho-D-ribosyl)glycinamide: step 1/2. In terms of biological role, phosphoribosylformylglycinamidine synthase involved in the purines biosynthetic pathway. Catalyzes the ATP-dependent conversion of formylglycinamide ribonucleotide (FGAR) and glutamine to yield formylglycinamidine ribonucleotide (FGAM) and glutamate. The protein is Phosphoribosylformylglycinamidine synthase of Shewanella sp. (strain MR-4).